A 1481-amino-acid polypeptide reads, in one-letter code: Cystic fibrosis transmembrane conductance regulator (1481 aa).

Over 1-77 the chain is Cytoplasmic; the sequence is MQRSPLEKAS…KLINALRRCF (77 aa). The helical transmembrane segment at 78-98 threads the bilayer; the sequence is FWRFTFYGILLYLGEVTKAVQ. Residues 81 to 365 enclose the ABC transmembrane type-1 1 domain; sequence FTFYGILLYL…WAVQTWYDSL (285 aa). At 99 to 122 the chain is on the extracellular side; it reads PLLLGRIIASYDPDNKTERSIAIY. A helical membrane pass occupies residues 123-146; that stretch reads LGIGLCLLFIVRTLLLHPAIFGLH. At 147–195 the chain is on the cytoplasmic side; sequence HIGMQMRIAMFSLIYKKTLKLSSRVLDKISIGQLVSLLSNNLNKFDEGL. Residues 196-216 traverse the membrane as a helical segment; that stretch reads ALAHFVWIAPLQVALLMGLIW. At 217–222 the chain is on the extracellular side; sequence ELLQAS. The helical transmembrane segment at 223-243 threads the bilayer; it reads AFCGLGFLIVLALFQAGLGRM. Residues 244–298 are Cytoplasmic-facing; sequence MMKYRDQRAGKINERLVITSEMIENIQSVKAYCWEEAMEKMIENLRQTELKLTRK. The chain crosses the membrane as a helical span at residues 299–319; sequence AAYVRYFNSSAFFFSGFFVVF. The Extracellular segment spans residues 320-339; the sequence is LSVLPYALIKGIILRKIFTT. Residues 340–358 form a helical membrane-spanning segment; it reads ISFCIVLRMAVTRQFPWAV. The Cytoplasmic segment spans residues 359–858; that stretch reads QTWYDSLGAI…YLRYITLHKS (500 aa). ATP contacts are provided by residues Trp401, Ser434, 458 to 465, and Gln493; that span reads GSTGAGKT. Residues 423-646 enclose the ABC transporter 1 domain; sequence NDDNNLFFSN…RPDFSSKLMG (224 aa). A lipid anchor (S-palmitoyl cysteine) is attached at Cys524. Residues Ser549 and Ser660 each carry the phosphoserine modification. A disordered R region region spans residues 654 to 831; sequence SSERRNSILT…EEINEEDLKE (178 aa). Residue Ser670 is modified to Phosphoserine; by PKA. Ser686 is subject to Phosphoserine. Lys688 is covalently cross-linked (Glycyl lysine isopeptide (Lys-Gly) (interchain with G-Cter in ubiquitin)). A phosphoserine mark is found at Ser700 and Ser712. Thr717 is modified (phosphothreonine). A phosphoserine mark is found at Ser737, Ser753, Ser768, Ser790, Ser795, and Ser813. Residues 859–879 traverse the membrane as a helical segment; sequence LIFVLIWCLVIFLAEVAASLV. Residues 859-1155 enclose the ABC transmembrane type-1 2 domain; sequence LIFVLIWCLV…AVNSSIDVDS (297 aa). Over 880–918 the chain is Extracellular; that stretch reads VLWLLRNTPFQDKGNSTYSRNNSYAVIITNTSSYYVFYI. Asn894, Asn900, and Asn909 each carry an N-linked (GlcNAc...) asparagine glycan. The discontinuously helical transmembrane segment at 919–939 threads the bilayer; it reads YVGVADTLLALGFFRGLPLVH. The Cytoplasmic segment spans residues 940 to 990; it reads TLITVSKILHHKMLHSVLQAPMSTLNTLKAGGILNRFSKDIAILDDLLPLT. Residues 991-1011 traverse the membrane as a helical segment; the sequence is IFDFIQLLLIVIGAIAVVSVL. Residues 1012–1013 are Extracellular-facing; that stretch reads QP. Residues 1014-1034 form a helical membrane-spanning segment; the sequence is YIFLATVPVIAAFVLLRAYFL. Over 1035–1095 the chain is Cytoplasmic; that stretch reads QTSQQLKQLE…TANWFLYLST (61 aa). Residues 1096–1116 traverse the membrane as a helical segment; it reads LRWFQMRIEMIFVIFFIAVTF. Topologically, residues 1117–1130 are extracellular; the sequence is ISILTTGEGEGTVG. A helical transmembrane segment spans residues 1131 to 1151; that stretch reads IILTLAMNIMSTLQWAVNSSI. The Cytoplasmic portion of the chain corresponds to 1152 to 1481; the sequence is DVDSLMRSVS…TEEEVQETRL (330 aa). In terms of domain architecture, ABC transporter 2 spans 1211–1444; that stretch reads MTIKDLTAKY…KSLFRQAISH (234 aa). Residues Tyr1220 and 1245–1252 each bind ATP; that span reads GRTGSGKS. The interval 1387–1481 is interaction with GORASP2; the sequence is RALKQAFADC…TEEEVQETRL (95 aa). The S-palmitoyl cysteine moiety is linked to residue Cys1396. Phosphoserine is present on residues Ser1445 and Ser1457. The tract at residues 1453 to 1481 is disordered; it reads HRNSSKYKSRPQIASLKEETEEEVQETRL. Over residues 1471–1481 the composition is skewed to acidic residues; the sequence is ETEEEVQETRL. Positions 1479 to 1481 match the PDZ-binding motif; that stretch reads TRL.

The protein belongs to the ABC transporter superfamily. ABCC family. CFTR transporter (TC 3.A.1.202) subfamily. In terms of assembly, monomer; does not require oligomerization for channel activity. May form oligomers in the membrane. Interacts with SLC26A3, SLC26A6 and NHERF1. Interacts with SHANK2. Interacts with MYO6. Interacts (via C-terminus) with GOPC (via PDZ domain); this promotes CFTR internalization and thereby decreases channel activity. Interacts with SLC4A7 through NHERF1. Found in a complex with MYO5B and RAB11A. Interacts with ANO1. Interacts with SLC26A8. Interacts with AHCYL1; the interaction increases CFTR activity. Interacts with CSE1L. The core-glycosylated form interacts with GORASP2 (via PDZ GRASP-type 1 domain) in respone to ER stress. Interacts with MARCHF2; the interaction leads to CFTR ubiqtuitination and degradation. Interacts with ADGRG2. Post-translationally, N-glycosylated. Phosphorylated; cAMP treatment promotes phosphorylation and activates the channel. Dephosphorylation decreases the ATPase activity (in vitro). Phosphorylation at PKA sites activates the channel. Phosphorylation at PKC sites enhances the response to phosphorylation by PKA. Phosphorylated by AMPK; this inhibits channel activity. In terms of processing, ubiquitinated, leading to its degradation in the lysosome. Deubiquitination by USP10 in early endosomes enhances its endocytic recycling to the cell membrane. Ubiquitinated by RNF185 during ER stress. Ubiquitinated by MARCHF2.

It localises to the apical cell membrane. It is found in the early endosome membrane. The protein localises to the cell membrane. Its subcellular location is the recycling endosome membrane. The protein resides in the endoplasmic reticulum membrane. It localises to the nucleus. The catalysed reaction is ATP + H2O + closed Cl(-) channel = ADP + phosphate + open Cl(-) channel.. It carries out the reaction chloride(in) = chloride(out). The enzyme catalyses hydrogencarbonate(in) = hydrogencarbonate(out). It catalyses the reaction ATP + H2O = ADP + phosphate + H(+). Functionally, epithelial ion channel that plays an important role in the regulation of epithelial ion and water transport and fluid homeostasis. Mediates the transport of chloride ions across the cell membrane. Possesses an intrinsic ATPase activity and utilizes ATP to gate its channel; the passive flow of anions through the channel is gated by cycles of ATP binding and hydrolysis by the ATP-binding domains. The ion channel is also permeable to HCO(3)(-); selectivity depends on the extracellular chloride concentration. Exerts its function also by modulating the activity of other ion channels and transporters. Contributes to the regulation of the pH and the ion content of the epithelial fluid layer. Modulates the activity of the epithelial sodium channel (ENaC) complex, in part by regulating the cell surface expression of the ENaC complex. May regulate bicarbonate secretion and salvage in epithelial cells by regulating the transporter SLC4A7. Can inhibit the chloride channel activity of ANO1. Plays a role in the chloride and bicarbonate homeostasis during sperm epididymal maturation and capacitation. This chain is Cystic fibrosis transmembrane conductance regulator, found in Callithrix jacchus (White-tufted-ear marmoset).